Here is a 655-residue protein sequence, read N- to C-terminus: p-hydroxybenzoic acid efflux pump subunit AaeB (655 aa).

A run of 11 helical transmembrane segments spans residues 13–33 (FAVK…HFQL), 38–58 (WAVL…GGEP), 67–89 (GFLR…IAMI), 93–112 (LLMI…ISSL), 121–141 (WGLA…EPLL), 152–172 (EIVI…PRSI), 370–390 (LFWL…IAVV), 407–427 (FIYG…VIIP), 431–451 (QSML…GIEV), 459–479 (MGAL…TFHF), and 482–502 (FLDS…VILL).

It belongs to the aromatic acid exporter ArAE (TC 2.A.85) family.

The protein resides in the cell inner membrane. Forms an efflux pump with AaeA. Could function as a metabolic relief valve, allowing to eliminate certain compounds when they accumulate to high levels in the cell. This is p-hydroxybenzoic acid efflux pump subunit AaeB from Escherichia coli O9:H4 (strain HS).